The primary structure comprises 926 residues: Alanine--tRNA ligase (926 aa).

Zn(2+) is bound by residues His-615, His-619, Cys-719, and His-723. Residues 887–910 (RVGGGGGGPPDFAQGGGPDADALD) form a disordered region. The segment covering 888 to 904 (VGGGGGGPPDFAQGGGP) has biased composition (gly residues).

The protein belongs to the class-II aminoacyl-tRNA synthetase family. Requires Zn(2+) as cofactor.

The protein resides in the cytoplasm. It carries out the reaction tRNA(Ala) + L-alanine + ATP = L-alanyl-tRNA(Ala) + AMP + diphosphate. Its function is as follows. Catalyzes the attachment of alanine to tRNA(Ala) in a two-step reaction: alanine is first activated by ATP to form Ala-AMP and then transferred to the acceptor end of tRNA(Ala). Also edits incorrectly charged Ser-tRNA(Ala) and Gly-tRNA(Ala) via its editing domain. The chain is Alanine--tRNA ligase from Halorubrum lacusprofundi (strain ATCC 49239 / DSM 5036 / JCM 8891 / ACAM 34).